We begin with the raw amino-acid sequence, 208 residues long: MSIRVKVCGITRVEDALAAVHLGANAVGFVFWEQSARYISPAEARGIVSTLPPFVTSVGVYVDPEAGWVDESISVAGLNLLQFHGSESPEFCQQFSLPYIKAVRVRPGLDLLQYASLYTGATGLLLDTYVEGEPGGTGEAFDWNLIPRNLPLPLILSGGLHAGNVTSAIQQAHPWAVDVSSGVEAAKGIKDSGKIAAFMRGVGISESL.

Belongs to the TrpF family.

The enzyme catalyses N-(5-phospho-beta-D-ribosyl)anthranilate = 1-(2-carboxyphenylamino)-1-deoxy-D-ribulose 5-phosphate. It functions in the pathway amino-acid biosynthesis; L-tryptophan biosynthesis; L-tryptophan from chorismate: step 3/5. The protein is N-(5'-phosphoribosyl)anthranilate isomerase of Nitrosospira multiformis (strain ATCC 25196 / NCIMB 11849 / C 71).